The following is a 404-amino-acid chain: Putative gustatory receptor 94a (404 aa).

Topologically, residues 1 to 11 (MDFTSDYAHRR) are cytoplasmic. A helical transmembrane segment spans residues 12 to 32 (MVKFLTIILIGFMTVFGLLAN). Over 33–43 (RYRAGRRERFR) the chain is Extracellular. Residues 44–64 (FSKANLAFASLWAIAFSLVYG) form a helical membrane-spanning segment. The Cytoplasmic segment spans residues 65–133 (RQIYKEYQEG…RLDSRSLYIS (69 aa)). A helical transmembrane segment spans residues 134–154 (IVLALVKTVAFPLTIEVAFIL). Topologically, residues 155-171 (QQRRQHPEMSLIWTLYR) are extracellular. A helical membrane pass occupies residues 172-192 (LFPLIISNFLNNCYFGAMVVV). Topologically, residues 193–260 (KEILYALNRR…HSGKYLTPMS (68 aa)) are cytoplasmic. Residues 261-281 (LSMILSLICHLLGITVGFYSL) form a helical membrane-spanning segment. At 282 to 296 (YYAIADTLIMGKPYD) the chain is on the extracellular side. Residues 297–317 (GLGSLINLVFLSISLAEITLL) form a helical membrane-spanning segment. At 318-376 (THLCNHLLVATRRSAVILQEMNLQHADSRYRQAVHGFTLLVTVTKYQIKPLGLYELDMR) the chain is on the cytoplasmic side. The chain crosses the membrane as a helical span at residues 377–397 (LISNVFSAVASFLLILVQADL). The Extracellular portion of the chain corresponds to 398–404 (SQRFKMQ).

This sequence belongs to the insect chemoreceptor superfamily. Gustatory receptor (GR) family. Gr22e subfamily. In terms of tissue distribution, in larvae, is expressed in neurons of the terminal external chemosensory organ.

The protein localises to the cell membrane. In terms of biological role, probable gustatory receptor which mediates acceptance or avoidance behavior, depending on its substrates. In Drosophila melanogaster (Fruit fly), this protein is Putative gustatory receptor 94a (Gr94a).